The primary structure comprises 741 residues: Aspartyl/asparaginyl beta-hydroxylase (741 aa).

The disordered stretch occupies residues 1–54; sequence MAPRKNAKGGGGNSSSSGSGSGSGSGSPSTGSSGSSSSPGARREAKHGGHKNGR. The Cytoplasmic segment spans residues 1 to 62; it reads MAPRKNAKGG…GRRGGISGGS (62 aa). The segment covering 8-25 has biased composition (gly residues); the sequence is KGGGGNSSSSGSGSGSGS. At Ser15 the chain carries Phosphoserine. The span at 26-40 shows a compositional bias: low complexity; the sequence is GSPSTGSSGSSSSPG. A helical; Signal-anchor for type II membrane protein transmembrane segment spans residues 63-83; it reads FFTWFMVIALLGVWTSVAVVW. Topologically, residues 84-741 are lumenal; that stretch reads FDLVDYEEVL…PQQRRSLPAI (658 aa). The Ca(2+) site is built by Asp100, Asp102, Asp104, Asp106, and Asp111. 2 disordered regions span residues 120-141 and 222-244; these read ERSP…AELE and TASQ…SDPS. Acidic residues predominate over residues 231 to 242; it reads MEEMTNEQENSD. 5 TPR repeats span residues 324–357, 365–398, 437–470, 472–504, and 508–540; these read IKAE…YPQS, AQCE…PDAP, TTLK…TPND, FAKV…GDPG, and GRFY…GHFA. A glycan (N-linked (GlcNAc...) asparagine) is linked at Asn453. A 2-oxoglutarate-binding site is contributed by Trp608. Cys624 and Cys631 are disulfide-bonded. Ser651 contacts 2-oxoglutarate. His662 serves as a coordination point for Fe cation. Residue 671-673 participates in 2-oxoglutarate binding; it reads RMH. N-linked (GlcNAc...) asparagine glycosylation is present at Asn689. His708 is a binding site for Fe cation. Residue Arg718 participates in 2-oxoglutarate binding.

Belongs to the aspartyl/asparaginyl beta-hydroxylase family. Monomer. Isoform 2 interacts with CASQ2. The cofactor is Fe cation. In terms of tissue distribution, isoform 1 is detected in heart, liver and ovary (at protein level). Detected in heart ventricle. Isoform 1 is widely expressed. Isoform 2 is detected in heart and skeletal muscle.

The protein resides in the endoplasmic reticulum membrane. It is found in the sarcoplasmic reticulum membrane. The enzyme catalyses L-aspartyl-[protein] + 2-oxoglutarate + O2 = 3-hydroxy-L-aspartyl-[protein] + succinate + CO2. Specifically hydroxylates an Asp or Asn residue in certain epidermal growth factor-like (EGF) domains of a number of proteins. The protein is Aspartyl/asparaginyl beta-hydroxylase (Asph) of Mus musculus (Mouse).